Reading from the N-terminus, the 386-residue chain is Rhomboid domain-containing protein 3 (386 aa).

The next 5 helical transmembrane spans lie at 20 to 40 (VLML…LVLA), 58 to 78 (LGHT…TVGW), 92 to 112 (ASAL…GLGL), 141 to 161 (GALP…LLSS), and 163 to 183 (PPFL…AGAF). The region spanning 324-362 (VSSLRLQQLERMGFPTEQAVVALAATGRVEGAVSLLVGG) is the UBA domain.

The protein localises to the membrane. This Homo sapiens (Human) protein is Rhomboid domain-containing protein 3 (RHBDD3).